A 332-amino-acid polypeptide reads, in one-letter code: tRNA-dihydrouridine synthase B (332 aa).

FMN contacts are provided by residues 16 to 18 (PMA) and glutamine 70. Residue cysteine 100 is the Proton donor of the active site. Residues lysine 139, 200–202 (NGD), and 224–225 (GR) contribute to the FMN site.

Belongs to the Dus family. DusB subfamily. FMN is required as a cofactor.

The enzyme catalyses a 5,6-dihydrouridine in tRNA + NAD(+) = a uridine in tRNA + NADH + H(+). It carries out the reaction a 5,6-dihydrouridine in tRNA + NADP(+) = a uridine in tRNA + NADPH + H(+). Functionally, catalyzes the synthesis of 5,6-dihydrouridine (D), a modified base found in the D-loop of most tRNAs, via the reduction of the C5-C6 double bond in target uridines. This chain is tRNA-dihydrouridine synthase B, found in Xanthomonas campestris pv. campestris (strain ATCC 33913 / DSM 3586 / NCPPB 528 / LMG 568 / P 25).